A 216-amino-acid polypeptide reads, in one-letter code: Flagellin B2 (216 aa).

Positions 1-12 (MKIKEFMSNKKG) are excised as a propeptide. 6 N-linked (GlcNAc...) asparagine glycosylation sites follow: N38, N72, N77, N113, N172, and N208.

Belongs to the archaeal flagellin family. N-linked glycans consist of the 779 Da trisaccharide beta-ManNAc(Thr)-(1-4)-beta-GlcNAc3NAcA-(1-3)-beta-GlcNAc.

It localises to the archaeal flagellum. Its function is as follows. Flagellin is the subunit protein which polymerizes to form the filaments of archaeal flagella. This is Flagellin B2 (flaB2) from Methanococcus voltae.